Here is a 142-residue protein sequence, read N- to C-terminus: Rhinocerosin (142 aa).

A signal peptide spans 1–16 (MMKLYIVFGFIAFSAA). A propeptide spanning residues 17–70 (YVVPEGYYEPEYYPADGYESERVARASPAELIFDEDLADEPEVEEPQYYIRTRR) is cleaved from the precursor. Positions 72-96 (LQPGAPNFPMPGSQLPTSITSNIEK) are disordered. Positions 85–96 (QLPTSITSNIEK) are enriched in polar residues.

The protein belongs to the coleoptericin family. As to expression, strongly expressed in the fat body and the Malpighian tubules, and weakly expressed in hemocytes and midgut.

It localises to the secreted. In terms of biological role, has strong antibacterial activity against E.coli, Streptococcus pyogenes, Staphylococcus aureus but not against Pseudomonas aeruginosa. The polypeptide is Rhinocerosin (Oryctes rhinoceros (Coconut rhinoceros beetle)).